A 156-amino-acid polypeptide reads, in one-letter code: Arginine repressor (156 aa).

This sequence belongs to the ArgR family.

It is found in the cytoplasm. It participates in amino-acid biosynthesis; L-arginine biosynthesis [regulation]. Functionally, regulates arginine biosynthesis genes. This chain is Arginine repressor, found in Shewanella piezotolerans (strain WP3 / JCM 13877).